A 450-amino-acid polypeptide reads, in one-letter code: 23S rRNA (uracil(1939)-C(5))-methyltransferase RlmD (450 aa).

Residues 12–70 enclose the TRAM domain; sequence SKQLSAKLSLSVNQLDHLGAGIAQHQGKVVFIPGALPDETVTVQLTEQKKNYARAKLIK. 4 residues coordinate [4Fe-4S] cluster: C83, C89, C92, and C171. 6 residues coordinate S-adenosyl-L-methionine: Q283, F312, N317, E333, D360, and D380. C406 acts as the Nucleophile in catalysis.

It belongs to the class I-like SAM-binding methyltransferase superfamily. RNA M5U methyltransferase family. RlmD subfamily.

It catalyses the reaction uridine(1939) in 23S rRNA + S-adenosyl-L-methionine = 5-methyluridine(1939) in 23S rRNA + S-adenosyl-L-homocysteine + H(+). Its function is as follows. Catalyzes the formation of 5-methyl-uridine at position 1939 (m5U1939) in 23S rRNA. The sequence is that of 23S rRNA (uracil(1939)-C(5))-methyltransferase RlmD from Shewanella baltica (strain OS223).